Here is a 468-residue protein sequence, read N- to C-terminus: Purple acid phosphatase 10 (468 aa).

The first 25 residues, 1–25 (MGRVRKSDFGSIVLVLCCVLNSLLC), serve as a signal peptide directing secretion. 2 N-linked (GlcNAc...) asparagine glycosylation sites follow: asparagine 95 and asparagine 113. Aspartate 167 provides a ligand contact to Fe cation. The N-linked (GlcNAc...) asparagine glycan is linked to asparagine 175. Residues aspartate 196 and tyrosine 199 each coordinate Fe cation. Aspartate 196 serves as a coordination point for Zn(2+). Asparagine 233 is a Zn(2+) binding site. Asparagine 233 contacts substrate. Residue asparagine 306 is glycosylated (N-linked (GlcNAc...) asparagine). Residue histidine 318 participates in Zn(2+) binding. Histidine 328 functions as the Proton donor in the catalytic mechanism. Histidine 355 contributes to the Zn(2+) binding site. 355–357 (HVH) serves as a coordination point for substrate. Histidine 357 contributes to the Fe cation binding site. An N-linked (GlcNAc...) asparagine glycan is attached at asparagine 428.

The protein belongs to the metallophosphoesterase superfamily. Purple acid phosphatase family. In terms of assembly, homodimer; disulfide-linked. Requires Fe cation as cofactor. It depends on Zn(2+) as a cofactor. Expressed in roots, stems, leaves, flowers and siliques.

Its subcellular location is the secreted. It localises to the cytoplasm. It carries out the reaction a phosphate monoester + H2O = an alcohol + phosphate. This is Purple acid phosphatase 10 (PAP10) from Arabidopsis thaliana (Mouse-ear cress).